The primary structure comprises 74 residues: Large ribosomal subunit protein bL28 (74 aa).

It belongs to the bacterial ribosomal protein bL28 family.

This chain is Large ribosomal subunit protein bL28, found in Buchnera aphidicola subsp. Baizongia pistaciae (strain Bp).